The chain runs to 133 residues: Magnetosome protein MamC (133 aa).

The Cytoplasmic portion of the chain corresponds to 1-5 (MAAFN). Residues 6–26 (LALYLSKSIPGVGVLGGVIGG) traverse the membrane as a helical segment. Topologically, residues 27–67 (SAALAKNLKAKQRGEITTEEAVIDTGKEALGAGLATTVSAY) are lumenal. The tract at residues 37–57 (KQRGEITTEEAVIDTGKEALG) is magnetite interacting component (MIC) binds magnetite. The chain crosses the membrane as a helical span at residues 68 to 88 (AAGVVGGGLVVSLGTAFAVAV). The Cytoplasmic portion of the chain corresponds to 89 to 133 (AGKYAWDYGMEQMEAKLQEKKHQEQGGQTYGDNPDPFDPQELETP). The disordered stretch occupies residues 105-133 (LQEKKHQEQGGQTYGDNPDPFDPQELETP).

This sequence belongs to the magnetosome MamC family. Probably interacts with MamA.

Its subcellular location is the magnetosome membrane. Its function is as follows. Probably helps control the size of magnetite crystals; in vitro synthesis of magnetite yields larger and more well-developed magnetite crystals in the presence of purified MamC. Binds Fe(3+). The lumenal domain probably binds magnetite crystals, affecting crystal size and shape. Purified MamC self-assembles into micelles in the presence of ferric chloride hexahydrate (FeCl(3).6H(2)O); both oxygen and iron are present in the proteinaceous micelles. Whether this is relevant in vivo is unknown. The sequence is that of Magnetosome protein MamC from Magnetococcus marinus (strain ATCC BAA-1437 / JCM 17883 / MC-1).